Here is a 575-residue protein sequence, read N- to C-terminus: uncharacterized protein (575 aa).

A run of 6 helical transmembrane segments spans residues Phe-16 to Ile-36, Trp-50 to Leu-70, Pro-132 to Ile-152, Trp-154 to Phe-174, Ile-243 to Val-263, and Ile-264 to Phe-284. Positions Phe-16–Arg-299 constitute an ABC transmembrane type-1 domain. The ABC transporter domain occupies Ile-333–Ala-567. Gly-366 to Ser-373 contacts ATP.

The protein belongs to the ABC transporter superfamily.

The protein localises to the cell membrane. It is found in the membrane raft. This is an uncharacterized protein from Bacillus subtilis (strain 168).